The chain runs to 426 residues: Glutamate-1-semialdehyde 2,1-aminomutase (426 aa).

Lys-268 carries the post-translational modification N6-(pyridoxal phosphate)lysine.

The protein belongs to the class-III pyridoxal-phosphate-dependent aminotransferase family. HemL subfamily. The cofactor is pyridoxal 5'-phosphate.

The protein resides in the cytoplasm. It carries out the reaction (S)-4-amino-5-oxopentanoate = 5-aminolevulinate. It functions in the pathway porphyrin-containing compound metabolism; protoporphyrin-IX biosynthesis; 5-aminolevulinate from L-glutamyl-tRNA(Glu): step 2/2. The sequence is that of Glutamate-1-semialdehyde 2,1-aminomutase from Saccharolobus islandicus (strain Y.N.15.51 / Yellowstone #2) (Sulfolobus islandicus).